The chain runs to 191 residues: Probable molybdenum cofactor guanylyltransferase (191 aa).

GTP-binding positions include Leu6–Gly8, Lys18, Asp67, and Asp92. Residue Asp92 coordinates Mg(2+).

It belongs to the MobA family. Mg(2+) is required as a cofactor.

It is found in the cytoplasm. The catalysed reaction is Mo-molybdopterin + GTP + H(+) = Mo-molybdopterin guanine dinucleotide + diphosphate. Functionally, transfers a GMP moiety from GTP to Mo-molybdopterin (Mo-MPT) cofactor (Moco or molybdenum cofactor) to form Mo-molybdopterin guanine dinucleotide (Mo-MGD) cofactor. This Thermococcus gammatolerans (strain DSM 15229 / JCM 11827 / EJ3) protein is Probable molybdenum cofactor guanylyltransferase.